A 325-amino-acid chain; its full sequence is ATP synthase gamma chain (325 aa).

The protein belongs to the ATPase gamma chain family. F-type ATPases have 2 components, CF(1) - the catalytic core - and CF(0) - the membrane proton channel. CF(1) has five subunits: alpha(3), beta(3), gamma(1), delta(1), epsilon(1). CF(0) has three main subunits: a, b and c.

It is found in the cell membrane. Its function is as follows. Produces ATP from ADP in the presence of a proton gradient across the membrane. The gamma chain is believed to be important in regulating ATPase activity and the flow of protons through the CF(0) complex. This is ATP synthase gamma chain from Corynebacterium glutamicum (strain ATCC 13032 / DSM 20300 / JCM 1318 / BCRC 11384 / CCUG 27702 / LMG 3730 / NBRC 12168 / NCIMB 10025 / NRRL B-2784 / 534).